A 34-amino-acid polypeptide reads, in one-letter code: Calcitonin-like peptide 1 (34 aa).

An intrachain disulfide couples Cys2 to Cys7. A Proline amide modification is found at Pro34.

This is Calcitonin-like peptide 1 from Odorrana schmackeri (Schmacker's frog).